We begin with the raw amino-acid sequence, 341 residues long: L-threonine 3-dehydrogenase (341 aa).

C38 serves as a coordination point for Zn(2+). Catalysis depends on charge relay system residues T40 and H43. The Zn(2+) site is built by H63, E64, C93, C96, C99, and C107. NAD(+) is bound by residues I175, D195, R200, 262–264, and 286–287; these read LGI and IY.

This sequence belongs to the zinc-containing alcohol dehydrogenase family. In terms of assembly, homotetramer. Zn(2+) serves as cofactor.

The protein resides in the cytoplasm. It catalyses the reaction L-threonine + NAD(+) = (2S)-2-amino-3-oxobutanoate + NADH + H(+). The protein operates within amino-acid degradation; L-threonine degradation via oxydo-reductase pathway; glycine from L-threonine: step 1/2. Functionally, catalyzes the NAD(+)-dependent oxidation of L-threonine to 2-amino-3-ketobutyrate. This Proteus mirabilis (strain HI4320) protein is L-threonine 3-dehydrogenase.